A 47-amino-acid polypeptide reads, in one-letter code: Photosystem II reaction center protein K (47 aa).

Positions 1-10 are excised as a propeptide; the sequence is MAVYTLDLLA. The chain crosses the membrane as a helical span at residues 19–39; sequence FGPLIDILPIIPLFFLLLAFV.

This sequence belongs to the PsbK family. As to quaternary structure, PSII is composed of 1 copy each of membrane proteins PsbA, PsbB, PsbC, PsbD, PsbE, PsbF, PsbH, PsbI, PsbJ, PsbK, PsbL, PsbM, PsbT, PsbX, PsbY, PsbZ, Psb30/Ycf12, peripheral proteins PsbO, CyanoQ (PsbQ), PsbU, PsbV and a large number of cofactors. It forms dimeric complexes.

The protein resides in the cellular thylakoid membrane. Its function is as follows. One of the components of the core complex of photosystem II (PSII). PSII is a light-driven water:plastoquinone oxidoreductase that uses light energy to abstract electrons from H(2)O, generating O(2) and a proton gradient subsequently used for ATP formation. It consists of a core antenna complex that captures photons, and an electron transfer chain that converts photonic excitation into a charge separation. The polypeptide is Photosystem II reaction center protein K (Synechococcus sp. (strain CC9311)).